A 355-amino-acid polypeptide reads, in one-letter code: Protein RecA (355 aa).

67–74 (GPESSGKT) contacts ATP.

It belongs to the RecA family.

It is found in the cytoplasm. Can catalyze the hydrolysis of ATP in the presence of single-stranded DNA, the ATP-dependent uptake of single-stranded DNA by duplex DNA, and the ATP-dependent hybridization of homologous single-stranded DNAs. It interacts with LexA causing its activation and leading to its autocatalytic cleavage. This Histophilus somni (strain 129Pt) (Haemophilus somnus) protein is Protein RecA.